The primary structure comprises 359 residues: DNA replication and repair protein RecF (359 aa).

An ATP-binding site is contributed by 30-37 (GPNGSGKT).

This sequence belongs to the RecF family.

The protein localises to the cytoplasm. Its function is as follows. The RecF protein is involved in DNA metabolism; it is required for DNA replication and normal SOS inducibility. RecF binds preferentially to single-stranded, linear DNA. It also seems to bind ATP. The protein is DNA replication and repair protein RecF of Aliivibrio fischeri (strain MJ11) (Vibrio fischeri).